Reading from the N-terminus, the 272-residue chain is MMEKLIITAAICGAEVTKEHNPAVPYTVEEIAREAESAYKAGASIIHLHVREDDGTPTQDKERFRKCIEAIREKCPDVIIQPSTGGAVGMTDLERLQPTELHPEMATLDCGTCNFGGDEIFVNTENTIKNFGKILIERGVKPEIEVFDKGMIDYAIRYQKQGFIQKPMHFDFVLGVQMSASARDLVFMSESIPEGSTWTVAGVGRHQFQMAALAIVMGGHVRVGFEDNVYIDKGILAKSNGELVERVVRLAKELGREIATPDEARQILSLKK.

Glu15 provides a ligand contact to (5S)-5-amino-3-oxohexanoate. The Zn(2+) site is built by His47 and His49. Residues Ser83, Gly86, and Thr107 each contribute to the (5S)-5-amino-3-oxohexanoate site. Glu226 provides a ligand contact to Zn(2+).

It belongs to the BKACE family. Kce subfamily. In terms of assembly, homotetramer. Zn(2+) serves as cofactor.

It catalyses the reaction (5S)-5-amino-3-oxohexanoate + acetyl-CoA = (3S)-3-aminobutanoyl-CoA + acetoacetate. It functions in the pathway amino-acid degradation; L-lysine degradation via acetate pathway. Its activity is regulated as follows. 3-fold increase in activity by addition of 10 mM 2-mercaptoethanol. Addition of CoCl(2) and to a lesser extent MnCl(2) increases the activity but not MgCl(2). Inhibited by phosphate buffer but not by 5,5'-dithio-2-nitrobenzoic acid. Its function is as follows. Involved in the anaerobic fermentation of lysine. Catalyzes the reversible reaction between 3-keto-5-aminohexanoate (KAH) and acetyl-CoA to form 3-aminobutyryl-CoA and acetoacetate. The reaction involves the deprotonation of KAH, the nucleophilic addition onto acetyl-CoA and the intramolecular transfer of the CoA moiety. It can also use beta-alanyl-CoA as substrate. The polypeptide is 3-keto-5-aminohexanoate cleavage enzyme (Fusobacterium nucleatum subsp. nucleatum (strain ATCC 25586 / DSM 15643 / BCRC 10681 / CIP 101130 / JCM 8532 / KCTC 2640 / LMG 13131 / VPI 4355)).